Here is a 391-residue protein sequence, read N- to C-terminus: Ectodysplasin-A (391 aa).

The segment covering 1–21 (MGYPEVERREPLPAAAPRERG) has biased composition (basic and acidic residues). The interval 1 to 28 (MGYPEVERREPLPAAAPRERGSQGCGCR) is disordered. Over 1-41 (MGYPEVERREPLPAAAPRERGSQGCGCRGAPARAGEGNSCR) the chain is Cytoplasmic. A helical; Signal-anchor for type II membrane protein transmembrane segment spans residues 42–62 (LFLGFFGLSLALHLLTLCCYL). Over 63-391 (ELRSELRRER…AIRLGEAPAS (329 aa)) the chain is Extracellular. Disordered regions lie at residues 72-129 (RGTE…DSQD) and 146-244 (YSEE…TGTR). The span at 86–96 (TSGTLSSPGSL) shows a compositional bias: low complexity. Residues 180 to 229 (GPPGPNGPPGPPGPPGPQGPPGIPGIPGIPGTTVMGPPGPPGPPGPQGPP) enclose the Collagen-like domain. 2 stretches are compositionally biased toward pro residues: residues 181–203 (PPGP…PGIP) and 216–228 (PPGP…PQGP). The 137-residue stretch at 249-385 (AVVHLQGQGS…HTTFFGAIRL (137 aa)) folds into the THD domain. Asn-313 carries an N-linked (GlcNAc...) asparagine glycan. The cysteines at positions 332 and 346 are disulfide-linked. N-linked (GlcNAc...) asparagine glycosylation is present at Asn-372.

Belongs to the tumor necrosis factor family. Homotrimer. The homotrimers may then dimerize and form higher-order oligomers. N-glycosylated. In terms of processing, processing by furin produces a secreted form.

It is found in the cell membrane. Its subcellular location is the secreted. In terms of biological role, cytokine which is involved in epithelial-mesenchymal signaling during morphogenesis of ectodermal organs. Functions as a ligand activating the DEATH-domain containing receptors EDAR and EDA2R. Isoform TAA binds only to the receptor EDAR, while isoform TA-A2 binds exclusively to the receptor EDA2R. May also play a role in cell adhesion. Functionally, isoform TAA binds only to the receptor EDAR, while isoform TA-A2 binds exclusively to the receptor EDA2R. Isoform TA-A2 binds exclusively to the receptor EDA2R. The sequence is that of Ectodysplasin-A (Eda) from Mus musculus (Mouse).